The chain runs to 508 residues: Pyruvate kinase 2 (508 aa).

Position 50 (Arg-50) interacts with substrate. 4 residues coordinate K(+): Asn-52, Ser-54, Asp-85, and Thr-86. Asn-52–His-55 lines the ATP pocket. Arg-92 and Lys-178 together coordinate ATP. Residue Glu-243 participates in Mg(2+) binding. Positions 266, 267, and 299 each coordinate substrate. Residue Asp-267 participates in Mg(2+) binding.

It belongs to the pyruvate kinase family. As to quaternary structure, homotetramer. It depends on Mg(2+) as a cofactor. K(+) serves as cofactor.

The enzyme catalyses pyruvate + ATP = phosphoenolpyruvate + ADP + H(+). The protein operates within carbohydrate degradation; glycolysis; pyruvate from D-glyceraldehyde 3-phosphate: step 5/5. The chain is Pyruvate kinase 2 (PYK2) from Candida glabrata (strain ATCC 2001 / BCRC 20586 / JCM 3761 / NBRC 0622 / NRRL Y-65 / CBS 138) (Yeast).